We begin with the raw amino-acid sequence, 302 residues long: UDP-N-acetylenolpyruvoylglucosamine reductase (302 aa).

In terms of domain architecture, FAD-binding PCMH-type spans 29–192 (KVGGPVDLLA…VAVTLQLSED (164 aa)). Arg172 is a catalytic residue. Ser221 (proton donor) is an active-site residue. Glu291 is an active-site residue.

It belongs to the MurB family. FAD serves as cofactor.

It is found in the cytoplasm. The enzyme catalyses UDP-N-acetyl-alpha-D-muramate + NADP(+) = UDP-N-acetyl-3-O-(1-carboxyvinyl)-alpha-D-glucosamine + NADPH + H(+). It functions in the pathway cell wall biogenesis; peptidoglycan biosynthesis. Cell wall formation. The polypeptide is UDP-N-acetylenolpyruvoylglucosamine reductase (Trichlorobacter lovleyi (strain ATCC BAA-1151 / DSM 17278 / SZ) (Geobacter lovleyi)).